Here is a 160-residue protein sequence, read N- to C-terminus: Transcription elongation factor GreA (160 aa).

Positions 49 to 75 (SEYDEAKNDQAFTEGRIIQLENMLKNA) form a coiled coil.

This sequence belongs to the GreA/GreB family.

Necessary for efficient RNA polymerase transcription elongation past template-encoded arresting sites. The arresting sites in DNA have the property of trapping a certain fraction of elongating RNA polymerases that pass through, resulting in locked ternary complexes. Cleavage of the nascent transcript by cleavage factors such as GreA or GreB allows the resumption of elongation from the new 3'terminus. GreA releases sequences of 2 to 3 nucleotides. This chain is Transcription elongation factor GreA, found in Clostridium beijerinckii (strain ATCC 51743 / NCIMB 8052) (Clostridium acetobutylicum).